The sequence spans 355 residues: Daphnetin O-methyltransferase 1 (355 aa).

Positions 222, 242, and 256 each coordinate S-adenosyl-L-homocysteine. Residue His260 is the Proton acceptor of the active site.

The protein belongs to the class I-like SAM-binding methyltransferase superfamily. Cation-independent O-methyltransferase family. COMT subfamily.

It carries out the reaction 7,8-dihydroxycoumarin + S-adenosyl-L-methionine = 7-hydroxy-8-methoxycoumarin + S-adenosyl-L-homocysteine + H(+). It participates in aromatic compound metabolism. The protein operates within secondary metabolite biosynthesis. Functionally, O-methyltransferase involved in the biosynthesis of coumarins natural products such as daphnetin derivatives. Catalyzes specifically the methylation of daphnetin (7,8-dihydroxycoumarin) to produce hydrangetin (7-hydroxy-8-methoxycoumarin). Probably involved in acclimation to low temperature conditions. The protein is Daphnetin O-methyltransferase 1 of Secale cereale (Rye).